The chain runs to 90 residues: Serine-rich and transmembrane domain-containing 2 (90 aa).

A glycan (N-linked (GlcNAc...) asparagine) is linked at Asn11. Residues 38–58 (YVGLFLSLLAILLILLFTMLL) form a helical membrane-spanning segment. The tract at residues 69-90 (SDSTESVPQFTDVEMQSRIPTP) is disordered.

The protein resides in the membrane. The polypeptide is Serine-rich and transmembrane domain-containing 2 (Homo sapiens (Human)).